The following is a 642-amino-acid chain: uncharacterized protein (642 aa).

Topologically, residues 1-15 (MVHITLGQAIWVSVK) are cytoplasmic. Residues 16 to 36 (PIIKIYLIIGVGFLMAKMGIL) form a helical membrane-spanning segment. The Extracellular segment spans residues 37 to 42 (TVEATR). Residues 43 to 63 (IISDIVLTVLLPSLSFNKIVA) form a helical membrane-spanning segment. The Cytoplasmic portion of the chain corresponds to 64 to 73 (NIEDKDIKSV). The chain crosses the membrane as a helical span at residues 74–94 (GIICLSALLIFGSGFFFAYVV). At 95 to 104 (RLFLPVPKQW) the chain is on the extracellular side. The chain crosses the membrane as a helical span at residues 105–125 (YGGILAGGMFPNISDLPIAYL). At 126–142 (QSMDQGLVFSEEEGNKG) the chain is on the cytoplasmic side. The helical transmembrane segment at 143 to 163 (VANVIIFLTMFLICIFNLGGF) threads the bilayer. The Extracellular portion of the chain corresponds to 164-460 (RLIESDFEYN…FLKNCLRPCS (297 aa)). Disordered stretches follow at residues 183 to 206 (ETTK…RFFS) and 227 to 324 (GTKG…SQPR). Composition is skewed to polar residues over residues 240-260 (RRST…NSKI) and 272-312 (IACT…SSID). A helical transmembrane segment spans residues 461–481 (MAVIIALTVAFIPWVKALFVT). Over 482–499 (TANTPHISQAPDNAPPLS) the chain is Cytoplasmic. A helical transmembrane segment spans residues 500-520 (FFMDFTGYVGAACVPFGLILL). Topologically, residues 521-538 (GATLGRLKIGNLYPGFWK) are extracellular. Residues 539–559 (AAVTLVILRQCVMPIFGVLWC) traverse the membrane as a helical segment. Residues 560-574 (DRLVKAGWVNWQDDR) lie on the Cytoplasmic side of the membrane. A helical transmembrane segment spans residues 575–595 (MLLFVIAISWNLPTMTTLIYF). Topologically, residues 596 to 614 (TASFTPPETTAPIQMECVS) are extracellular. A helical transmembrane segment spans residues 615 to 635 (FFLMLQYPLMVVSLPFLVSYF). Over 636-642 (LKVQMNL) the chain is Cytoplasmic.

It belongs to the auxin efflux carrier (TC 2.A.69) family.

The protein resides in the membrane. This is an uncharacterized protein from Saccharomyces cerevisiae (strain ATCC 204508 / S288c) (Baker's yeast).